Reading from the N-terminus, the 65-residue chain is Metallothionein (65 aa).

The protein belongs to the metallothionein superfamily. Type 4 family.

Its function is as follows. Metallothioneins have a high content of cysteine residues that bind various heavy metals. This chain is Metallothionein, found in Paracentrotus lividus (Common sea urchin).